Here is a 234-residue protein sequence, read N- to C-terminus: ATP-dependent dethiobiotin synthetase BioD (234 aa).

Position 12-17 (12-17 (DVGKTF)) interacts with ATP. Thr16 serves as a coordination point for Mg(2+). The active site involves Lys37. Position 41 (Thr41) interacts with substrate. ATP is bound by residues Asp54 and 115 to 118 (EGAG). 2 residues coordinate Mg(2+): Asp54 and Glu115.

This sequence belongs to the dethiobiotin synthetase family. In terms of assembly, homodimer. Requires Mg(2+) as cofactor.

It is found in the cytoplasm. It catalyses the reaction (7R,8S)-7,8-diammoniononanoate + CO2 + ATP = (4R,5S)-dethiobiotin + ADP + phosphate + 3 H(+). The protein operates within cofactor biosynthesis; biotin biosynthesis; biotin from 7,8-diaminononanoate: step 1/2. Functionally, catalyzes a mechanistically unusual reaction, the ATP-dependent insertion of CO2 between the N7 and N8 nitrogen atoms of 7,8-diaminopelargonic acid (DAPA, also called 7,8-diammoniononanoate) to form a ureido ring. This chain is ATP-dependent dethiobiotin synthetase BioD, found in Lysinibacillus sphaericus (Bacillus sphaericus).